The chain runs to 631 residues: Nucleoside triphosphatase I (631 aa).

The 163-residue stretch at 42–204 (FLGLDSMHSL…TMLVNLLRPG (163 aa)) folds into the Helicase ATP-binding domain. ATP is bound at residue 55–62 (HETGVGKT). Positions 141 to 144 (DECH) match the DEXH box motif. Residues 367–532 (KFIDVCLGIL…EFVQLFRVFK (166 aa)) enclose the Helicase C-terminal domain. The interval 457–524 (DIFILDMTWN…EIIQSKSKEF (68 aa)) is binding to the cap-specific mRNA (nucleoside-2'-O-)-methyltransferase.

Belongs to the helicase family. NPH I subfamily. Monomer. Interacts (via C-terminus) with RAP94/OPG109 (via N-terminus). Interacts with the cap-specific mRNA (nucleoside-2'-O-)-methyltransferase OPG102.

It localises to the virion. The catalysed reaction is a ribonucleoside 5'-triphosphate + H2O = a ribonucleoside 5'-diphosphate + phosphate + H(+). In terms of biological role, DNA-dependent ATPase that acts as a 5' to 3' translocase on single-stranded DNA and thereby plays a role in transcription termination of viral early genes. Uses forward translocation in concert with the viral RNA polymerase RAP94/OPG109 subunit and the capping enzyme/VTF to catalyze release of UUUUUNU-containing nascent RNA from the elongation complex. In addition, acts as a positive elongation factor to assist transcription through problematic sequences. The chain is Nucleoside triphosphatase I (OPG123) from Variola virus (isolate Human/India/Ind3/1967) (VARV).